The primary structure comprises 287 residues: Elongation factor Ts (287 aa).

The involved in Mg(2+) ion dislocation from EF-Tu stretch occupies residues 80 to 83; the sequence is TDFL.

The protein belongs to the EF-Ts family.

The protein resides in the cytoplasm. Associates with the EF-Tu.GDP complex and induces the exchange of GDP to GTP. It remains bound to the aminoacyl-tRNA.EF-Tu.GTP complex up to the GTP hydrolysis stage on the ribosome. This chain is Elongation factor Ts, found in Pseudomonas putida (strain W619).